The primary structure comprises 117 residues: NADH-ubiquinone oxidoreductase chain 3 (117 aa).

3 helical membrane passes run 4 to 24 (IIFI…LASI), 60 to 80 (ITII…MIII), and 86 to 106 (IMIW…GLYH).

The protein belongs to the complex I subunit 3 family.

It localises to the mitochondrion membrane. The enzyme catalyses a ubiquinone + NADH + 5 H(+)(in) = a ubiquinol + NAD(+) + 4 H(+)(out). In terms of biological role, core subunit of the mitochondrial membrane respiratory chain NADH dehydrogenase (Complex I) that is believed to belong to the minimal assembly required for catalysis. Complex I functions in the transfer of electrons from NADH to the respiratory chain. The immediate electron acceptor for the enzyme is believed to be ubiquinone. This is NADH-ubiquinone oxidoreductase chain 3 (mt:ND3) from Drosophila melanogaster (Fruit fly).